A 624-amino-acid chain; its full sequence is Kelch-like ECH-associated protein 1 (624 aa).

Cys-38 carries the S-(2-succinyl)cysteine modification. The BTB domain maps to 77–149; the sequence is CDVTLQVKYQ…AYTASISMGE (73 aa). Arg-135 participates in a covalent cross-link: N5-[4-(S-L-cysteinyl)-5-methyl-1H-imidazol-2-yl]-L-ornithine (Arg-Cys) (interchain with C-151 in KEAP1). Position 151 is an S-(2,3-dicarboxypropyl)cysteine; alternate (Cys-151). An S-(2-succinyl)cysteine; alternate modification is found at Cys-151. Cys-151 carries the post-translational modification S-nitrosocysteine; alternate. Residue Cys-151 forms an N5-[4-(S-L-cysteinyl)-5-methyl-1H-imidazol-2-yl]-L-ornithine (Cys-Arg) (interchain with R-135 in KEAP1) linkage. In terms of domain architecture, BACK spans 184–286; it reads AIGIANFAEQ…TPNFLQMQLQ (103 aa). At Cys-241 the chain carries S-(2-succinyl)cysteine. Residues Cys-257 and Cys-273 each carry the S-(2,3-dicarboxypropyl)cysteine modification. Cys-288 is modified (S-(2,3-dicarboxypropyl)cysteine; alternate). At Cys-288 the chain carries S-(2-succinyl)cysteine; alternate. S-(2-succinyl)cysteine is present on Cys-319. 6 Kelch repeats span residues 327–372, 373–423, 424–470, 471–517, 518–564, and 565–611; these read LIYT…VVGG, LLYA…VIDG, HIYA…VLNR, LLYA…VLHN, CIYA…VHQG, and RIYV…VTME. At Cys-434 the chain carries S-cGMP-cysteine. Cys-613 is modified (S-(2-succinyl)cysteine).

It belongs to the KEAP1 family. In terms of assembly, component of the BCR(KEAP1) E3 ubiquitin ligase complex, at least composed of 2 molecules of CUL3, 2 molecules of KEAP1, and RBX1. Interacts with NFE2L2/NRF2; the interaction is direct. Forms a ternary complex with NFE2L2/NRF2 and PGAM5. Interacts with (phosphorylated) SQSTM1/p62; the interaction is direct and inactivates the BCR(KEAP1) complex by sequestering it in inclusion bodies, promoting its degradation. Interacts with NFE2L1. Interacts with BPTF and PTMA. Interacts with MAP1LC3B. Interacts indirectly with ENC1. Interacts with SESN1 and SESN2. Interacts with HSP90AA1 and HSP90AB1. Interacts with PGCKA1; this interaction prevents the ubiquitination of KEAP1 by TRIM25, thus protecting KEAP1 from degradation. (Microbial infection) Interacts with ebolavirus protein VP24; this interaction activates transcription factor NFE2L2/NRF2 by blocking its interaction with KEAP1. In terms of processing, non-enzymatic covalent modifications of reactive cysteines by electrophile metabolites inactivate the BCR(KEAP1) complex. Accumulation of fumarate promotes the formation of cysteine S-succination (S-(2-succinyl)cysteine), leading to inactivate the BCR(KEAP1) complex and promote NFE2L2/NRF2 nuclear accumulation and activation. Nitric oxide-dependent 8-Nitro-cGMP formation promotes cysteine guanylation (S-cGMP-cysteine), leading to NFE2L2/NRF2 nuclear accumulation and activation. Itaconate, an anti-inflammatory metabolite generated in response to lipopolysaccharide, alkylates cysteines, activating NFE2L2/NRF2. Methylglyoxal, a reactive metabolite that accumulates when the glycolytic enzyme PGK1 is inhibited, promotes formation of a methylimidazole cross-link between proximal Cys-151 and Arg-135 on another KEAP1 molecule, resulting in an inactive dimer that inactivates the BCR(KEAP1) complex. Post-translationally, degraded via a proteasomal-independent process during selective autophagy: interaction with phosphorylated SQSTM1/p62 sequesters KEAP1 in inclusion bodies, leading to its degradation. Auto-ubiquitinated by the BCR(KEAP1) complex. Quinone-induced oxidative stress, but not sulforaphane, increases its ubiquitination. Ubiquitination and subsequent degradation is most pronounced following prolonged exposure of cells to oxidative stress, particularly in glutathione-deficient cells that are highly susceptible to oxidative stress. Deubiquitinated by USP25; leading to stabilization. Ubiquitinated by TRIM25; leading to degradation upon ER stress. In terms of tissue distribution, broadly expressed, with highest levels in skeletal muscle.

It localises to the cytoplasm. The protein resides in the nucleus. It participates in protein modification; protein ubiquitination. With respect to regulation, ubiquitin ligase activity of the BCR(KEAP1) complex is inhibited by oxidative stress and electrophile metabolites such as sulforaphane. Electrophile metabolites react with reactive cysteine residues in KEAP1 and trigger non-enzymatic covalent modifications of these cysteine residues, leading to inactivate the ubiquitin ligase activity of the BCR(KEAP1) complex. Selective autophagy also inactivates the BCR(KEAP1) complex via interaction between KEAP1 and SQSTM1/p62, which sequesters the complex in inclusion bodies and promotes its degradation. Its function is as follows. Substrate-specific adapter of a BCR (BTB-CUL3-RBX1) E3 ubiquitin ligase complex that regulates the response to oxidative stress by targeting NFE2L2/NRF2 for ubiquitination. KEAP1 acts as a key sensor of oxidative and electrophilic stress: in normal conditions, the BCR(KEAP1) complex mediates ubiquitination and degradation of NFE2L2/NRF2, a transcription factor regulating expression of many cytoprotective genes. In response to oxidative stress, different electrophile metabolites trigger non-enzymatic covalent modifications of highly reactive cysteine residues in KEAP1, leading to inactivate the ubiquitin ligase activity of the BCR(KEAP1) complex, promoting NFE2L2/NRF2 nuclear accumulation and expression of phase II detoxifying enzymes. In response to selective autophagy, KEAP1 is sequestered in inclusion bodies following its interaction with SQSTM1/p62, leading to inactivation of the BCR(KEAP1) complex and activation of NFE2L2/NRF2. The BCR(KEAP1) complex also mediates ubiquitination of SQSTM1/p62, increasing SQSTM1/p62 sequestering activity and degradation. The BCR(KEAP1) complex also targets BPTF and PGAM5 for ubiquitination and degradation by the proteasome. This Homo sapiens (Human) protein is Kelch-like ECH-associated protein 1.